A 354-amino-acid polypeptide reads, in one-letter code: Arginase-2, mitochondrial (354 aa).

A mitochondrion-targeting transit peptide spans 1-22 (MFLRSSASRLLHGQIPCVLTRS). Mn(2+) is bound by residues histidine 120, aspartate 143, histidine 145, and aspartate 147. Substrate is bound by residues 145–149 (HADIN), 156–158 (SGN), and glutamate 202. The Mn(2+) site is built by aspartate 251 and aspartate 253. Threonine 265 and glutamate 296 together coordinate substrate.

The protein belongs to the arginase family. In terms of assembly, homotrimer. It depends on Mn(2+) as a cofactor.

Its subcellular location is the mitochondrion. It carries out the reaction L-arginine + H2O = urea + L-ornithine. It functions in the pathway nitrogen metabolism; urea cycle; L-ornithine and urea from L-arginine: step 1/1. May play a role in the regulation of extra-urea cycle arginine metabolism and also in down-regulation of nitric oxide synthesis. Extrahepatic arginase functions to regulate L-arginine bioavailability to nitric oxid synthase (NOS). Arginine metabolism is a critical regulator of innate and adaptive immune responses. Seems to be involved in negative regulation of the survival capacity of activated CD4(+) and CD8(+) T cells. May suppress inflammation-related signaling in asthmatic airway epithelium. May contribute to the immune evasion of H.pylori by restricting M1 macrophage activation and polyamine metabolism. May play a role in promoting prenatal immune suppression. Regulates RPS6KB1 signaling, which promotes endothelial cell senescence and inflammation and implicates NOS3/eNOS dysfunction. Can inhibit endothelial autophagy independently of its enzymatic activity implicating mTORC2 signaling. Involved in vascular smooth muscle cell senescence and apoptosis independently of its enzymatic activity. The sequence is that of Arginase-2, mitochondrial (Arg2) from Mus musculus (Mouse).